Consider the following 108-residue polypeptide: Phosphoribosyl-AMP cyclohydrolase (108 aa).

Asp73 is a Mg(2+) binding site. Residue Cys74 participates in Zn(2+) binding. Mg(2+) contacts are provided by Asp75 and Asp77. Zn(2+) is bound by residues Cys90 and Cys97.

This sequence belongs to the PRA-CH family. Homodimer. Mg(2+) serves as cofactor. It depends on Zn(2+) as a cofactor.

The protein resides in the cytoplasm. It catalyses the reaction 1-(5-phospho-beta-D-ribosyl)-5'-AMP + H2O = 1-(5-phospho-beta-D-ribosyl)-5-[(5-phospho-beta-D-ribosylamino)methylideneamino]imidazole-4-carboxamide. It functions in the pathway amino-acid biosynthesis; L-histidine biosynthesis; L-histidine from 5-phospho-alpha-D-ribose 1-diphosphate: step 3/9. Its function is as follows. Catalyzes the hydrolysis of the adenine ring of phosphoribosyl-AMP. The protein is Phosphoribosyl-AMP cyclohydrolase of Lactiplantibacillus plantarum (strain ATCC BAA-793 / NCIMB 8826 / WCFS1) (Lactobacillus plantarum).